The sequence spans 256 residues: Type III pantothenate kinase (256 aa).

6-13 (DVGNSHIY) contributes to the ATP binding site. Residues tyrosine 99 and 106–109 (GADR) each bind substrate. Residue aspartate 108 is the Proton acceptor of the active site. Position 129 (aspartate 129) interacts with K(+). Threonine 132 contacts ATP. Threonine 184 contacts substrate.

Belongs to the type III pantothenate kinase family. In terms of assembly, homodimer. NH4(+) is required as a cofactor. The cofactor is K(+).

The protein resides in the cytoplasm. It carries out the reaction (R)-pantothenate + ATP = (R)-4'-phosphopantothenate + ADP + H(+). It participates in cofactor biosynthesis; coenzyme A biosynthesis; CoA from (R)-pantothenate: step 1/5. Functionally, catalyzes the phosphorylation of pantothenate (Pan), the first step in CoA biosynthesis. This chain is Type III pantothenate kinase, found in Legionella pneumophila (strain Corby).